Reading from the N-terminus, the 316-residue chain is L-lactate dehydrogenase (316 aa).

NAD(+) is bound by residues Val-15, Asp-36, Arg-41, Tyr-66, and 80 to 81; that span reads GA. Substrate is bound by residues Gln-83, Arg-90, and 122-125; that span reads NPVD. NAD(+) contacts are provided by residues 120–122 and Thr-145; that span reads ATN. Position 150 to 153 (150 to 153) interacts with substrate; the sequence is DTAR. Positions 155 and 170 each coordinate beta-D-fructose 1,6-bisphosphate. His-177 (proton acceptor) is an active-site residue. Position 222 is a phosphotyrosine (Tyr-222). Thr-231 serves as a coordination point for substrate. Positions 287–316 are disordered; sequence DPGLSDEEREALRDSARALRDSRADLTVGT. A compositionally biased stretch (basic and acidic residues) spans 296–310; sequence EALRDSARALRDSRA.

Belongs to the LDH/MDH superfamily. LDH family. As to quaternary structure, homotetramer.

It is found in the cytoplasm. The enzyme catalyses (S)-lactate + NAD(+) = pyruvate + NADH + H(+). The protein operates within fermentation; pyruvate fermentation to lactate; (S)-lactate from pyruvate: step 1/1. Its activity is regulated as follows. Allosterically activated by fructose 1,6-bisphosphate (FBP). Its function is as follows. Catalyzes the conversion of lactate to pyruvate. The polypeptide is L-lactate dehydrogenase (Salinibacter ruber (strain DSM 13855 / M31)).